The chain runs to 636 residues: Chaperone protein HtpG (636 aa).

An a; substrate-binding region spans residues 1–344 (MTMSVETQKE…SNDLSLNVSR (344 aa)). Residues 345-561 (EILQKDPIID…EQDLGMQMRQ (217 aa)) form a b region. Residues 562–636 (ILEASGQKVP…LNKLLVELSV (75 aa)) are c.

The protein belongs to the heat shock protein 90 family. Homodimer.

It localises to the cytoplasm. Its function is as follows. Molecular chaperone. Has ATPase activity. The sequence is that of Chaperone protein HtpG from Pseudomonas fluorescens (strain SBW25).